Reading from the N-terminus, the 317-residue chain is Protoheme IX farnesyltransferase (317 aa).

8 consecutive transmembrane segments (helical) span residues 25 to 45 (FFAL…LVGM), 54 to 74 (PVIA…SGCL), 126 to 146 (LAAG…SMWL), 154 to 174 (IVIG…VVTG), 181 to 201 (LVLF…LALV), 227 to 244 (IVAY…PVAL), 249 to 271 (LIYG…QVYH), and 281 to 301 (AAMG…SALL).

The protein belongs to the UbiA prenyltransferase family. Protoheme IX farnesyltransferase subfamily.

The protein localises to the cell inner membrane. It catalyses the reaction heme b + (2E,6E)-farnesyl diphosphate + H2O = Fe(II)-heme o + diphosphate. It functions in the pathway porphyrin-containing compound metabolism; heme O biosynthesis; heme O from protoheme: step 1/1. Its function is as follows. Converts heme B (protoheme IX) to heme O by substitution of the vinyl group on carbon 2 of heme B porphyrin ring with a hydroxyethyl farnesyl side group. In Methylobacterium sp. (strain 4-46), this protein is Protoheme IX farnesyltransferase.